We begin with the raw amino-acid sequence, 361 residues long: D-alanine--D-alanine ligase (361 aa).

The ATP-grasp domain occupies 149 to 353 (KKLMAAEGLP…YEELLDVLVQ (205 aa)). Position 176-231 (176-231 (KKLLGLPVFVKPARGGSSIGISKVSRWEDLPAAVDLARQHDEKVIVESEIVGPEVE)) interacts with ATP. Aspartate 308, glutamate 320, and asparagine 322 together coordinate Mg(2+).

Belongs to the D-alanine--D-alanine ligase family. It depends on Mg(2+) as a cofactor. Requires Mn(2+) as cofactor.

The protein localises to the cytoplasm. It carries out the reaction 2 D-alanine + ATP = D-alanyl-D-alanine + ADP + phosphate + H(+). It functions in the pathway cell wall biogenesis; peptidoglycan biosynthesis. Its function is as follows. Cell wall formation. In Corynebacterium efficiens (strain DSM 44549 / YS-314 / AJ 12310 / JCM 11189 / NBRC 100395), this protein is D-alanine--D-alanine ligase.